Here is a 403-residue protein sequence, read N- to C-terminus: Glutamyl-tRNA reductase 2 (403 aa).

Residues 47–50 (TCHR), Ser98, 103–105 (ETD), and Gln109 each bind substrate. Cys48 (nucleophile) is an active-site residue. NADP(+) is bound at residue 177-182 (GAGAVG).

It belongs to the glutamyl-tRNA reductase family. As to quaternary structure, homodimer.

The catalysed reaction is (S)-4-amino-5-oxopentanoate + tRNA(Glu) + NADP(+) = L-glutamyl-tRNA(Glu) + NADPH + H(+). It functions in the pathway porphyrin-containing compound metabolism; protoporphyrin-IX biosynthesis; 5-aminolevulinate from L-glutamyl-tRNA(Glu): step 1/2. Catalyzes the NADPH-dependent reduction of glutamyl-tRNA(Glu) to glutamate 1-semialdehyde (GSA). This is Glutamyl-tRNA reductase 2 from Pyrobaculum arsenaticum (strain DSM 13514 / JCM 11321 / PZ6).